Reading from the N-terminus, the 252-residue chain is Chitooligosaccharide deacetylase (252 aa).

Histidine 125 serves as a coordination point for Mg(2+).

This sequence belongs to the YdjC deacetylase family. ChbG subfamily. As to quaternary structure, homodimer. It depends on Mg(2+) as a cofactor.

The protein localises to the cytoplasm. The enzyme catalyses N,N'-diacetylchitobiose + H2O = N-acetyl-beta-D-glucosaminyl-(1-&gt;4)-D-glucosamine + acetate. The catalysed reaction is diacetylchitobiose-6'-phosphate + H2O = N'-monoacetylchitobiose-6'-phosphate + acetate. It participates in glycan degradation; chitin degradation. Involved in the degradation of chitin. ChbG is essential for growth on the acetylated chitooligosaccharides chitobiose and chitotriose but is dispensable for growth on cellobiose and chitosan dimer, the deacetylated form of chitobiose. Deacetylation of chitobiose-6-P and chitotriose-6-P is necessary for both the activation of the chb promoter by the regulatory protein ChbR and the hydrolysis of phosphorylated beta-glucosides by the phospho-beta-glucosidase ChbF. Catalyzes the removal of only one acetyl group from chitobiose-6-P to yield monoacetylchitobiose-6-P, the inducer of ChbR and the substrate of ChbF. The polypeptide is Chitooligosaccharide deacetylase (Escherichia coli O157:H7).